A 4882-amino-acid chain; its full sequence is Dual E2 ubiquitin-conjugating enzyme/E3 ubiquitin-protein ligase BIRC6 (4882 aa).

WD repeat units lie at residues 71 to 109 and 110 to 139; these read DGLH…QASA and LSAK…AVGC. A BIR repeat occupies 292-362; that stretch reads RRETFTSWPH…RHSPNCPFVK (71 aa). Zn(2+) is bound by residues cysteine 331, cysteine 334, histidine 351, and cysteine 358. The stretch at 382 to 429 is one WD 3 repeat; the sequence is LPSADGADRIACFGSGSCPQFLAAATKRGKICIWDVSKLMKVHLKFEI. Disordered stretches follow at residues 468–502, 542–561, and 582–622; these read DIPK…SQKE, GANP…KHQE, and ATSP…SELN. Residues 475 to 485 are compositionally biased toward acidic residues; sequence DSDDLLEDSDS. 3 positions are modified to phosphoserine: serine 476, serine 483, and serine 485. 4 WD repeats span residues 504–723, 733–854, 855–931, and 932–970; these read MEVS…VQCL, TLCI…QHIK, DPQD…AKVE, and PPKK…FLQI. A compositionally biased stretch (basic and acidic residues) spans 551–561; sequence KSEKTKEKHQE. The span at 582–591 shows a compositional bias: polar residues; sequence ATSPISSNSH. Serine 584 and serine 593 each carry phosphoserine. Over residues 598–622 the composition is skewed to polar residues; the sequence is SRTQGESISEQGSTDNESCTNSELN. The interval 1057 to 1077 is disordered; sequence QQQRRHPQHLHQQHHGDAAQH. The segment covering 1060–1069 has biased composition (basic residues); that stretch reads RRHPQHLHQQ. Position 1724 is a phosphothreonine (threonine 1724). 2 positions are modified to phosphoserine: serine 2245 and serine 2978. Residues 2969–2998 form a disordered region; the sequence is VTTNTTDSVSDEEKVSGGKDVNGSSASTPG. An HRRAR loop; important for DIABLO/SMAC and HTRA2 binding region spans residues 3212–3216; it reads HRRAR. Positions 3842-4092 constitute a Ubiquitin-like domain; the sequence is DEKVTMFLQS…ESLLETCPIQ (251 aa). 2 disordered regions span residues 3908–3927 and 3943–3973; these read SEQK…KVKA and LKSQ…IGSA. Position 3954 is a phosphothreonine (threonine 3954). At serine 4047 the chain carries Phosphoserine. The disordered stretch occupies residues 4285-4304; that stretch reads VPNSSLSQTEPQVSNSHNPT. The span at 4286-4304 shows a compositional bias: polar residues; it reads PNSSLSQTEPQVSNSHNPT. The 168-residue stretch at 4598-4765 folds into the UBC core domain; the sequence is ARARRLAQEA…IRQATVKWAM (168 aa). Cysteine 4691 (glycyl thioester intermediate) is an active-site residue. The disordered stretch occupies residues 4857–4882; that stretch reads AGAEDTLTHDHVNPSSSKDLPSDFQL. Over residues 4869-4882 the composition is skewed to polar residues; that stretch reads NPSSSKDLPSDFQL.

It belongs to the BIRC6 family. In terms of assembly, homodimer; antiparallel. Interacts with DIABLO/SMAC, likely with higher affinity to SMAC dimer than SMAC monomer; this interaction blocks the substrate-binding site and inhibits the caspase inhibition activity of BIRC6. Interacts with RNF41, KIF23/MKLP1, USP8/UBPY, BIRC5/survivin, MAP2K1/MEK1, RAB8A/RAB8, RAB11A/RAB11, PLK1, EXOC3/SEC6 and EXOC4/SEC8. Post-translationally, ubiquitinated. Ubiquitination is mediated by RNF41 E3 ligase and leads to proteasomal degradation, impairing inhibition of apoptosis. Deubiquitinated by USP8/UBPY. Autoubiquitinated; mediated by E1 ubiquitin activating enzyme UBA6. In terms of processing, proteolytically cleaved. Acts as substrate for CASP3, CASP6, CASP7, CASP9 and HTRA2. Widely expressed. Highly expressed in the brain and kidney.

The protein resides in the golgi apparatus. It is found in the trans-Golgi network membrane. Its subcellular location is the endosome. It localises to the cytoplasm. The protein localises to the cytoskeleton. The protein resides in the spindle pole. It is found in the microtubule organizing center. Its subcellular location is the centrosome. It localises to the midbody. The protein localises to the midbody ring. It carries out the reaction S-ubiquitinyl-[E1 ubiquitin-activating enzyme]-L-cysteine + [acceptor protein]-L-lysine = [E1 ubiquitin-activating enzyme]-L-cysteine + N(6)-monoubiquitinyl-[acceptor protein]-L-lysine.. With respect to regulation, inhibited by DIABLO/SMAC, which competes for the substrate-binding sites on BIRC6. BIRC6 inhibits caspases and protease by ubiquitination but BIRC6 itself is subjected to protease cleavage by CASP3, CASP6, CASP7, CASP9 and HTRA2 by protease cleavage. In terms of biological role, anti-apoptotic protein known as inhibitor of apoptosis (IAP) which can regulate cell death by controlling caspases and by acting as an E3 ubiquitin-protein ligase. Unlike most IAPs, does not contain a RING domain and it is not a RING-type E3 ligase. Instead acts as a dual E2/E3 enzyme that combines ubiquitin conjugating (E2) and ubiquitin ligase (E3) activities in a single polypeptide. Ubiquitination is mediated by a non-canonical E1 ubiquitin activating enzyme UBA6. Ubiquitinates CASP3, CASP7 and CASP9 and inhibits their caspase activity; also ubiquitinates their procaspases but to a weaker extent. Ubiquitinates pro-apoptotic factors DIABLO/SMAC and HTRA2. DIABLO/SMAC antagonizes the caspase inhibition activity of BIRC6 by competing for the same binding sites as the caspases. Ubiquitinates the autophagy protein MAP1LC3B; this activity is also inhibited by DIABLO/SMAC. Important regulator for the final stages of cytokinesis. Crucial for normal vesicle targeting to the site of abscission, but also for the integrity of the midbody and the midbody ring, and its striking ubiquitin modification. Required for normal placenta development. The polypeptide is Dual E2 ubiquitin-conjugating enzyme/E3 ubiquitin-protein ligase BIRC6 (Birc6) (Mus musculus (Mouse)).